We begin with the raw amino-acid sequence, 322 residues long: Picrinine-N-methytransferase (322 aa).

The SAM motif I stretch occupies residues 103–112 (MLDVGCGLGG). Positions 166-174 (GTFDLVFTI) are SAM motif II. Residues 193–202 (VAAPGAPVVI) form an SAM motif III region.

This sequence belongs to the class I-like SAM-binding methyltransferase superfamily. gTMT family. In terms of assembly, homodimer. In terms of tissue distribution, accumulates in tissues actively synthesizing monoterpenoid indole alkaloids (MIAs) (at protein level). Mainly expressed in young leaves, but barely in roots and stems.

It localises to the cytoplasm. Its subcellular location is the cytosol. The catalysed reaction is picrinine + S-adenosyl-L-methionine = ervincine + S-adenosyl-L-homocysteine + H(+). It functions in the pathway alkaloid biosynthesis; vindoline biosynthesis. Its function is as follows. S-adenosyl-L-methionine-dependent N-methyltransferase involved in the biosynthesis of biologically active monoterpenoid indole alkaloids (MIAs) natural products including vindoline. Catalyzes the conversion of picrinine to N-methylpicrinine (ervincine). Also accepts, with low efficiency, 21-hydroxycyclolochnericine and norajmaline as substrates. The sequence is that of Picrinine-N-methytransferase from Vinca minor (Common periwinkle).